Reading from the N-terminus, the 216-residue chain is Ribosomal RNA small subunit methyltransferase G (216 aa).

Residues glycine 75, leucine 80, and arginine 141 each coordinate S-adenosyl-L-methionine.

It belongs to the methyltransferase superfamily. RNA methyltransferase RsmG family.

It localises to the cytoplasm. It catalyses the reaction guanosine(527) in 16S rRNA + S-adenosyl-L-methionine = N(7)-methylguanosine(527) in 16S rRNA + S-adenosyl-L-homocysteine. Functionally, specifically methylates the N7 position of guanine in position 527 of 16S rRNA. The sequence is that of Ribosomal RNA small subunit methyltransferase G from Nitrosospira multiformis (strain ATCC 25196 / NCIMB 11849 / C 71).